Here is a 152-residue protein sequence, read N- to C-terminus: Superoxide dismutase [Cu-Zn] (152 aa).

The Cu cation site is built by His45, His47, and His62. The cysteines at positions 56 and 145 are disulfide-linked. Zn(2+)-binding residues include His62, His70, His79, and Asp82. His119 contacts Cu cation.

It belongs to the Cu-Zn superoxide dismutase family. Homodimer. The cofactor is Cu cation. It depends on Zn(2+) as a cofactor.

The protein resides in the cytoplasm. It carries out the reaction 2 superoxide + 2 H(+) = H2O2 + O2. In terms of biological role, destroys radicals which are normally produced within the cells and which are toxic to biological systems. The polypeptide is Superoxide dismutase [Cu-Zn] (SODCC) (Ipomoea batatas (Sweet potato)).